Reading from the N-terminus, the 238-residue chain is Tyrosine recombinase XerD-like (238 aa).

The 75-residue stretch at 1 to 75 (MKLPNEIEEY…SANQYFLFLY (75 aa)) folds into the Core-binding (CB) domain. The 149-residue stretch at 90–238 (VQKKTQSSES…TITALEKYYR (149 aa)) folds into the Tyr recombinase domain. Catalysis depends on residues lysine 154 and arginine 204. The active-site O-(3'-phospho-DNA)-tyrosine intermediate is tyrosine 236.

It belongs to the 'phage' integrase family. XerD-like subfamily.

The protein localises to the cytoplasm. In terms of biological role, putative tyrosine recombinase. Not involved in the cutting and rejoining of the recombining DNA molecules on dif(SL) site. The polypeptide is Tyrosine recombinase XerD-like (Lactococcus lactis subsp. cremoris (strain SK11)).